We begin with the raw amino-acid sequence, 828 residues long: Translation initiation factor IF-2 (828 aa).

2 disordered regions span residues 48-76 and 112-137; these read SYSGSTTTLSLNKEKGSLETGSSSGSEEF and ASQEDPIEVEQEESSDTNKVKEEPKI. Over residues 49 to 58 the composition is skewed to polar residues; sequence YSGSTTTLSL. Residues 65–74 show a composition bias toward low complexity; it reads LETGSSSGSE. Residues 116 to 126 show a composition bias toward acidic residues; that stretch reads DPIEVEQEESS. Over residues 127–137 the composition is skewed to basic and acidic residues; sequence DTNKVKEEPKI. The tr-type G domain occupies 326-496; that stretch reads SRAPVVTVMG…LLIAEMQNLK (171 aa). Residues 335–342 form a G1 region; that stretch reads GHVDHGKT. 335 to 342 contributes to the GTP binding site; sequence GHVDHGKT. A G2 region spans residues 360–364; it reads GITQH. Residues 382–385 form a G3 region; the sequence is DTPG. GTP is bound by residues 382–386 and 436–439; these read DTPGH and NKID. Positions 436 to 439 are G4; it reads NKID. Residues 472–474 are G5; it reads SAL.

This sequence belongs to the TRAFAC class translation factor GTPase superfamily. Classic translation factor GTPase family. IF-2 subfamily.

It localises to the cytoplasm. One of the essential components for the initiation of protein synthesis. Protects formylmethionyl-tRNA from spontaneous hydrolysis and promotes its binding to the 30S ribosomal subunits. Also involved in the hydrolysis of GTP during the formation of the 70S ribosomal complex. The sequence is that of Translation initiation factor IF-2 from Rickettsia bellii (strain RML369-C).